A 433-amino-acid chain; its full sequence is MSKKLFIQTLGCAMNVRDSEHIIAELSQKEDYTLTQNLEEADLILINTCSVREKPVHKLFSEVGAFEKAKKNGAKIGVCGCTASHLGDEIFKRAPYVDFVLGARNVSKISTAVKTPKFISTDINHDESEYAFGEFRGSPYKSHINISIGCDKKCTYCIVPHTRGDEISIPANLILREVEKAATNGAKEIFLLGQNVNNYGKRFSGAHEKIDFSDLLVRISEVAGVERIRFTSPHPLHMDDKFLEIFSQNPKICKSMHMPLQSGNTKVLREMKRGYTKEWFLDRAAKLREMCPDVSISTDIIVAFPGESDAEFEDTMDVLERVKFEQIFSFKYSPRPMTKAAEFTNQIDEATASARLTRLQSRHNEILDEIVAAQEGKILDVYFEELRANGGVAGRSFNNFLVQVNGSEELLGRTLKVKITDTKRMVLYGELAN.

Residues 3–118 form the MTTase N-terminal domain; the sequence is KKLFIQTLGC…ISTAVKTPKF (116 aa). [4Fe-4S] cluster is bound by residues cysteine 12, cysteine 49, cysteine 81, cysteine 150, cysteine 154, and cysteine 157. One can recognise a Radical SAM core domain in the interval 136–369; it reads RGSPYKSHIN…QSRHNEILDE (234 aa). Positions 372–433 constitute a TRAM domain; sequence AAQEGKILDV…RMVLYGELAN (62 aa).

This sequence belongs to the methylthiotransferase family. MiaB subfamily. Monomer. [4Fe-4S] cluster is required as a cofactor.

Its subcellular location is the cytoplasm. The enzyme catalyses N(6)-dimethylallyladenosine(37) in tRNA + (sulfur carrier)-SH + AH2 + 2 S-adenosyl-L-methionine = 2-methylsulfanyl-N(6)-dimethylallyladenosine(37) in tRNA + (sulfur carrier)-H + 5'-deoxyadenosine + L-methionine + A + S-adenosyl-L-homocysteine + 2 H(+). Its function is as follows. Catalyzes the methylthiolation of N6-(dimethylallyl)adenosine (i(6)A), leading to the formation of 2-methylthio-N6-(dimethylallyl)adenosine (ms(2)i(6)A) at position 37 in tRNAs that read codons beginning with uridine. In Campylobacter curvus (strain 525.92), this protein is tRNA-2-methylthio-N(6)-dimethylallyladenosine synthase.